The following is a 125-amino-acid chain: MSWQAYVDDQLVGTGHVIGAAIIGHDGNVWASKNLSLKAGEGAKIVNGFKDSASVLSGGIFVDGQKYLTIKADDKSIYGKKGAGGVVLVKTGQSVLIGHYNETIQPGQATTVVEKLADYLRENGY.

At Ser-2 the chain carries N-acetylserine.

The protein belongs to the profilin family. Occurs in many kinds of cells as a complex with monomeric actin in a 1:1 ratio.

The protein resides in the cytoplasm. It is found in the cytoskeleton. Functionally, binds to actin and affects the structure of the cytoskeleton. At high concentrations, profilin prevents the polymerization of actin, whereas it enhances it at low concentrations. By binding to PIP2, it inhibits the formation of IP3 and DG. This is Profilin-A (PROA) from Physarum polycephalum (Slime mold).